The following is a 164-amino-acid chain: Phosphopantetheine adenylyltransferase (164 aa).

Ser-9 lines the substrate pocket. Residues 9 to 10 (SF) and His-17 contribute to the ATP site. Residues Lys-41, Val-78, and Arg-92 each contribute to the substrate site. Residues 93–95 (GLR), Glu-103, and 128–134 (VRTITAT) contribute to the ATP site.

Belongs to the bacterial CoaD family. As to quaternary structure, homohexamer. Mg(2+) serves as cofactor.

It is found in the cytoplasm. The catalysed reaction is (R)-4'-phosphopantetheine + ATP + H(+) = 3'-dephospho-CoA + diphosphate. It functions in the pathway cofactor biosynthesis; coenzyme A biosynthesis; CoA from (R)-pantothenate: step 4/5. Functionally, reversibly transfers an adenylyl group from ATP to 4'-phosphopantetheine, yielding dephospho-CoA (dPCoA) and pyrophosphate. This chain is Phosphopantetheine adenylyltransferase, found in Brucella anthropi (strain ATCC 49188 / DSM 6882 / CCUG 24695 / JCM 21032 / LMG 3331 / NBRC 15819 / NCTC 12168 / Alc 37) (Ochrobactrum anthropi).